Reading from the N-terminus, the 275-residue chain is Transcription regulator AOL_s00215g275 (275 aa).

Disordered regions lie at residues 13 to 65 and 84 to 108; these read TPLP…SSIG and ILQQ…RQRL. A compositionally biased stretch (polar residues) spans 14 to 26; sequence PLPSLNSSRSPQR. Residues 27-40 are compositionally biased toward low complexity; the sequence is TPSLGSSSTSSLSP. The segment covering 47-60 has biased composition (polar residues); the sequence is TPSTPESNDSGLTL. Residues 88–106 are compositionally biased toward basic residues; that stretch reads KSRHQNQPSRRHKQKNRRQ.

Regulatory protein; part of the gene cluster that mediates the biosynthesis of sesquiterpenyl epoxy-cyclohexenoids (SECs) such as anthrobotrisins and arthrosporols, metabolites that possess a novel hybrid carbon skeleton consisting of a polyketide-derived epoxycyclohexenol combined with a terpenoid-derived monocyclic sesquiterpenol substructure (PKS-PTS hybrid). The SEC pathway plays an important role for fungal soil colonization via decreasing fungal nematode-capturing ability. AOL_s00215g275 can perform multiple functions in fungal growth and development via regulating the SEC biosynthesis, TCA cycle, and septa formation. Also involved in inhibiting conidial formation, germination, and nematicidal activity but promotes trap production. Plays a role in fungal resistances and significantly regulates the fungal morphology and responses to chemical stressors such as cell-wall-perturbing agents (SDS and Congo red), osmotic agents (NaCl and sorbitol), or the oxidant H(2)O(2). This Arthrobotrys oligospora (strain ATCC 24927 / CBS 115.81 / DSM 1491) (Nematode-trapping fungus) protein is Transcription regulator AOL_s00215g275.